A 119-amino-acid chain; its full sequence is Acidic phospholipase A2 CM-II (119 aa).

Ca(2+)-binding residues include Tyr-25, Gly-27, and Gly-29. His-45 is a catalytic residue. Position 46 (Asp-46) interacts with Ca(2+). Residue Asp-87 is part of the active site.

The protein belongs to the phospholipase A2 family. Group II subfamily. D49 sub-subfamily. The cofactor is Ca(2+). Contains 6 disulfide bonds. Expressed by the venom gland.

The protein resides in the secreted. The catalysed reaction is a 1,2-diacyl-sn-glycero-3-phosphocholine + H2O = a 1-acyl-sn-glycero-3-phosphocholine + a fatty acid + H(+). Functionally, PLA2 catalyzes the calcium-dependent hydrolysis of the 2-acyl groups in 3-sn-phosphoglycerides. The protein is Acidic phospholipase A2 CM-II of Bitis nasicornis (Rhinoceros adder).